Here is a 167-residue protein sequence, read N- to C-terminus: Small ribosomal subunit protein uS5 (167 aa).

The 64-residue stretch at 11 to 74 (LQEKLIAVNR…EKARRAMINV (64 aa)) folds into the S5 DRBM domain.

Belongs to the universal ribosomal protein uS5 family. In terms of assembly, part of the 30S ribosomal subunit. Contacts proteins S4 and S8.

Functionally, with S4 and S12 plays an important role in translational accuracy. Its function is as follows. Located at the back of the 30S subunit body where it stabilizes the conformation of the head with respect to the body. In Yersinia enterocolitica serotype O:8 / biotype 1B (strain NCTC 13174 / 8081), this protein is Small ribosomal subunit protein uS5.